Reading from the N-terminus, the 767-residue chain is Protein ROLLING AND ERECT LEAF 2 (767 aa).

Disordered stretches follow at residues 1 to 20 (MGCT…CKER), 78 to 187 (PALA…SEFF), and 201 to 309 (RELE…SSTV). Composition is skewed to pro residues over residues 81–90 (APTPTPPPPS) and 110–126 (APPP…PPPV). The segment covering 145–155 (SDSSVASPARS) has biased composition (low complexity). A compositionally biased stretch (basic and acidic residues) spans 201–210 (RELEEEEKAR). Residues 221–232 (EDEVDDDDDERE) are compositionally biased toward acidic residues. The span at 255–264 (TRSEEGEMGN) shows a compositional bias: basic and acidic residues.

As to expression, highly expressed in young leaves and panicles. Expressed at low levels in roots.

The protein resides in the cell membrane. Involved in the regulation of leaf shape formation. May function by coordinating the expression of genes associated with leaf and bulliform cell development. This is Protein ROLLING AND ERECT LEAF 2 from Oryza sativa subsp. japonica (Rice).